A 224-amino-acid polypeptide reads, in one-letter code: Heme response regulator HssR (224 aa).

One can recognise a Response regulatory domain in the interval 3 to 116; sequence NCLIVDDDKK…ELLFRIKAVL (114 aa). Position 52 is a 4-aspartylphosphate (Asp52). The segment at residues 124–222 is a DNA-binding region (ompR/PhoB-type); sequence DNELQLGNLI…VRGQGYRVDQ (99 aa).

Phosphorylated by HssS.

It localises to the cytoplasm. Functionally, member of the two-component regulatory system HssS/HssR involved in intracellular heme homeostasis and tempering of staphylococcal virulence. Phosphorylated HssR binds to a direct repeat sequence within hrtAB promoter and activates the expression of hrtAB, an efflux pump, in response to extracellular heme, hemin, hemoglobin or blood. This chain is Heme response regulator HssR (hssR), found in Staphylococcus epidermidis (strain ATCC 35984 / DSM 28319 / BCRC 17069 / CCUG 31568 / BM 3577 / RP62A).